Consider the following 527-residue polypeptide: Type 2 DNA topoisomerase 6 subunit B (527 aa).

ATP-binding positions include Asn-39, Asp-73, Ser-94 to Lys-95, Gly-103 to Lys-110, and Lys-421.

It belongs to the TOP6B family. Homodimer. Heterotetramer of two Top6A and two Top6B chains.

The catalysed reaction is ATP-dependent breakage, passage and rejoining of double-stranded DNA.. Its function is as follows. Relaxes both positive and negative superturns and exhibits a strong decatenase activity. The chain is Type 2 DNA topoisomerase 6 subunit B from Pyrobaculum aerophilum (strain ATCC 51768 / DSM 7523 / JCM 9630 / CIP 104966 / NBRC 100827 / IM2).